Here is a 39-residue protein sequence, read N- to C-terminus: Photosystem II reaction center protein L (39 aa).

The helical transmembrane segment at 18 to 38 threads the bilayer; sequence SLYLGLLLVFVTAVLFTSYFF.

It belongs to the PsbL family. In terms of assembly, PSII is composed of 1 copy each of membrane proteins PsbA, PsbB, PsbC, PsbD, PsbE, PsbF, PsbH, PsbI, PsbJ, PsbK, PsbL, PsbM, PsbT, PsbX, PsbY, Psb30/Ycf12, peripheral proteins PsbO, CyanoQ (PsbQ), PsbU, PsbV and a large number of cofactors. It forms dimeric complexes.

Its subcellular location is the cellular thylakoid membrane. In terms of biological role, one of the components of the core complex of photosystem II (PSII). PSII is a light-driven water:plastoquinone oxidoreductase that uses light energy to abstract electrons from H(2)O, generating O(2) and a proton gradient subsequently used for ATP formation. It consists of a core antenna complex that captures photons, and an electron transfer chain that converts photonic excitation into a charge separation. This subunit is found at the monomer-monomer interface and is required for correct PSII assembly and/or dimerization. The chain is Photosystem II reaction center protein L from Prochlorococcus marinus (strain MIT 9313).